The following is a 74-amino-acid chain: Delta-stichotoxin-Sgt2a (74 aa).

An N-terminal signal peptide occupies residues 1-19; that stretch reads MNRLIILVFAAVFLTLASA. Positions 20-28 are excised as a propeptide; the sequence is EVSEDVNMA. 3 disulfides stabilise this stretch: Cys-34-Cys-71, Cys-36-Cys-64, and Cys-57-Cys-72.

Belongs to the sea anemone sodium channel inhibitory toxin family. Type I subfamily.

The protein resides in the secreted. Its subcellular location is the nematocyst. In terms of biological role, binds specifically to voltage-gated sodium channels (Nav), thereby delaying their inactivation during signal transduction. This chain is Delta-stichotoxin-Sgt2a, found in Stichodactyla gigantea (Giant carpet anemone).